Consider the following 361-residue polypeptide: Mannonate dehydratase 1 (361 aa).

The protein belongs to the mannonate dehydratase family. Requires Fe(2+) as cofactor. Mn(2+) is required as a cofactor.

The catalysed reaction is D-mannonate = 2-dehydro-3-deoxy-D-gluconate + H2O. Its pathway is carbohydrate metabolism; pentose and glucuronate interconversion. Its function is as follows. Catalyzes the dehydration of D-mannonate. In Halalkalibacterium halodurans (strain ATCC BAA-125 / DSM 18197 / FERM 7344 / JCM 9153 / C-125) (Bacillus halodurans), this protein is Mannonate dehydratase 1 (uxuA1).